The sequence spans 203 residues: Small ribosomal subunit protein uS4 (203 aa).

Residues 93–156 enclose the S4 RNA-binding domain; sequence RRLDNVVYRL…MKVPAILEAV (64 aa).

Belongs to the universal ribosomal protein uS4 family. As to quaternary structure, part of the 30S ribosomal subunit. Contacts protein S5. The interaction surface between S4 and S5 is involved in control of translational fidelity.

One of the primary rRNA binding proteins, it binds directly to 16S rRNA where it nucleates assembly of the body of the 30S subunit. Functionally, with S5 and S12 plays an important role in translational accuracy. This chain is Small ribosomal subunit protein uS4, found in Streptococcus pyogenes serotype M4 (strain MGAS10750).